The following is a 317-amino-acid chain: Glycine--tRNA ligase alpha subunit (317 aa).

This sequence belongs to the class-II aminoacyl-tRNA synthetase family. Tetramer of two alpha and two beta subunits.

It is found in the cytoplasm. The enzyme catalyses tRNA(Gly) + glycine + ATP = glycyl-tRNA(Gly) + AMP + diphosphate. The sequence is that of Glycine--tRNA ligase alpha subunit from Pseudomonas fluorescens (strain SBW25).